Here is a 486-residue protein sequence, read N- to C-terminus: Cardiolipin synthase A (486 aa).

Helical transmembrane passes span 3–23 and 38–58; these read TFYT…IAGV and MAWL…YLSF. PLD phosphodiesterase domains are found at residues 219–246 and 399–426; these read MDLR…VDPR and EGGL…DMRS. Catalysis depends on residues His224, Lys226, Asp231, His404, Lys406, and Asp411.

It belongs to the phospholipase D family. Cardiolipin synthase subfamily. ClsA sub-subfamily.

The protein resides in the cell inner membrane. The enzyme catalyses 2 a 1,2-diacyl-sn-glycero-3-phospho-(1'-sn-glycerol) = a cardiolipin + glycerol. Its function is as follows. Catalyzes the reversible phosphatidyl group transfer from one phosphatidylglycerol molecule to another to form cardiolipin (CL) (diphosphatidylglycerol) and glycerol. This chain is Cardiolipin synthase A, found in Yersinia pseudotuberculosis serotype O:3 (strain YPIII).